A 126-amino-acid polypeptide reads, in one-letter code: Fluoride-specific ion channel FluC 2 (126 aa).

Transmembrane regions (helical) follow at residues 11–31 (IFLI…LCEL), 43–63 (VLGS…GFIG), 69–89 (AFGT…VQSF), and 93–113 (FFPA…GVFM). 2 residues coordinate Na(+): glycine 76 and threonine 79.

The protein belongs to the fluoride channel Fluc/FEX (TC 1.A.43) family.

It is found in the cell membrane. The catalysed reaction is fluoride(in) = fluoride(out). Its activity is regulated as follows. Na(+) is not transported, but it plays an essential structural role and its presence is essential for fluoride channel function. Functionally, fluoride-specific ion channel. Important for reducing fluoride concentration in the cell, thus reducing its toxicity. The protein is Fluoride-specific ion channel FluC 2 of Methanosarcina barkeri (strain Fusaro / DSM 804).